Consider the following 210-residue polypeptide: Large ribosomal subunit protein uL4 (210 aa).

A disordered region spans residues 46–85; the sequence is QGTASTLTRSEVRGGGRKPYKQKGTGRARQGSIRTPLRPG. Positions 60–71 are enriched in basic residues; the sequence is GGRKPYKQKGTG.

Belongs to the universal ribosomal protein uL4 family. In terms of assembly, part of the 50S ribosomal subunit.

In terms of biological role, one of the primary rRNA binding proteins, this protein initially binds near the 5'-end of the 23S rRNA. It is important during the early stages of 50S assembly. It makes multiple contacts with different domains of the 23S rRNA in the assembled 50S subunit and ribosome. Forms part of the polypeptide exit tunnel. The polypeptide is Large ribosomal subunit protein uL4 (Prochlorococcus marinus (strain AS9601)).